The primary structure comprises 90 residues: Phosphocarrier protein NPr (90 aa).

Residues 2-90 (TQYRRVAIKN…ALFESGFDED (89 aa)) form the HPr domain. H16 serves as the catalytic Pros-phosphohistidine intermediate.

This sequence belongs to the HPr family.

It is found in the cytoplasm. Its function is as follows. Component of the phosphoenolpyruvate-dependent nitrogen-metabolic phosphotransferase system (nitrogen-metabolic PTS), that seems to be involved in regulating nitrogen metabolism. The phosphoryl group from phosphoenolpyruvate (PEP) is transferred to the phosphoryl carrier protein NPr by enzyme I-Ntr. Phospho-NPr then transfers it to EIIA-Ntr. Could function in the transcriptional regulation of sigma-54 dependent operons in conjunction with the NPr (PtsO) and EIIA-Ntr (PtsN) proteins. The sequence is that of Phosphocarrier protein NPr (ptsO) from Proteus mirabilis (strain HI4320).